The chain runs to 269 residues: Putative phosphoenolpyruvate synthase regulatory protein (269 aa).

Position 149-156 (149-156 (GVSRSGKT)) interacts with ADP.

Belongs to the pyruvate, phosphate/water dikinase regulatory protein family. PSRP subfamily.

It carries out the reaction [pyruvate, water dikinase] + ADP = [pyruvate, water dikinase]-phosphate + AMP + H(+). The enzyme catalyses [pyruvate, water dikinase]-phosphate + phosphate + H(+) = [pyruvate, water dikinase] + diphosphate. Its function is as follows. Bifunctional serine/threonine kinase and phosphorylase involved in the regulation of the phosphoenolpyruvate synthase (PEPS) by catalyzing its phosphorylation/dephosphorylation. This chain is Putative phosphoenolpyruvate synthase regulatory protein, found in Colwellia psychrerythraea (strain 34H / ATCC BAA-681) (Vibrio psychroerythus).